Reading from the N-terminus, the 817-residue chain is Protein Jade-3 (817 aa).

The disordered stretch occupies residues 1–38; sequence MKRLRNLSSSDSSDNESPSTSFSSCFQHKGKGKCTADD. Low complexity predominate over residues 8 to 24; that stretch reads SSSDSSDNESPSTSFSS. The segment at 202-252 adopts a PHD-type 1 zinc-finger fold; that stretch reads DVICDVCRSPDSEEGNDMVFCDRCNICVHQACYGILKVPEGSWLCRTCVLG. The C2HC pre-PHD-type zinc-finger motif lies at 254-288; sequence HPQCILCPKTGGAMKATRTGTKWAHVSCALWIPEV. The PHD-type 2 zinc finger occupies 312–368; it reads LVCSLCKLKTGACIQCSVKSCITAFHVTCAFEHSLEMKTILDEGDEVKFKSYCLKHS. Disordered stretches follow at residues 375-396, 665-689, and 719-817; these read ISEQ…SERT, NGVL…QNSE, and LVRT…SVQR. The segment covering 379–396 has biased composition (basic and acidic residues); it reads EEPHKTHSDNRPTESERT. A compositionally biased stretch (polar residues) spans 667-689; the sequence is VLSSGDRTQRDSSSQTSPGQNSE. Over residues 722–743 the composition is skewed to basic and acidic residues; sequence TTEDLRSSEKPQRRQSVKERLW. The span at 747–758 shows a compositional bias: polar residues; the sequence is PADTQTSGTPYQ. Residues 777 to 799 show a composition bias toward basic and acidic residues; that stretch reads DENKDHMLLRRNSRESPNRDSCR. Residues 801–810 show a composition bias toward basic residues; sequence SRIRGKRKMT.

It belongs to the JADE family. In terms of assembly, component of the HBO1 complex.

Its function is as follows. Scaffold subunit of some HBO1 complexes, which have a histone H4 acetyltransferase activity. The chain is Protein Jade-3 (jade3) from Xenopus tropicalis (Western clawed frog).